A 367-amino-acid chain; its full sequence is Alginate lyase (367 aa).

The signal sequence occupies residues 1–27 (MKTSHLIRITLPGALAAALLASQVSQA). Residues 65–66 (SK), 138–139 (HT), and Tyr256 contribute to the substrate site.

This sequence belongs to the polysaccharide lyase 5 family.

Its subcellular location is the periplasm. The catalysed reaction is Eliminative cleavage of alginate to give oligosaccharides with 4-deoxy-alpha-L-erythro-hex-4-enuronosyl groups at their non-reducing ends and beta-D-mannuronate at their reducing end.. In terms of biological role, catalyzes the depolymerization of alginate by cleaving the beta-1,4 glycosidic bond between two adjacent sugar residues via a beta-elimination mechanism. May serve to degrade mislocalized alginate that is trapped in the periplasmic space. This is Alginate lyase from Pseudomonas paraeruginosa (strain DSM 24068 / PA7) (Pseudomonas aeruginosa (strain PA7)).